The chain runs to 363 residues: UDP-N-acetylglucosamine--N-acetylmuramyl-(pentapeptide) pyrophosphoryl-undecaprenol N-acetylglucosamine transferase (363 aa).

UDP-N-acetyl-alpha-D-glucosamine is bound by residues 15 to 17 (TGG), Asn-127, Arg-169, Ser-197, Ile-251, 270 to 275 (ALTVSE), and Gln-296.

It belongs to the glycosyltransferase 28 family. MurG subfamily.

The protein resides in the cell inner membrane. It carries out the reaction di-trans,octa-cis-undecaprenyl diphospho-N-acetyl-alpha-D-muramoyl-L-alanyl-D-glutamyl-meso-2,6-diaminopimeloyl-D-alanyl-D-alanine + UDP-N-acetyl-alpha-D-glucosamine = di-trans,octa-cis-undecaprenyl diphospho-[N-acetyl-alpha-D-glucosaminyl-(1-&gt;4)]-N-acetyl-alpha-D-muramoyl-L-alanyl-D-glutamyl-meso-2,6-diaminopimeloyl-D-alanyl-D-alanine + UDP + H(+). Its pathway is cell wall biogenesis; peptidoglycan biosynthesis. Its function is as follows. Cell wall formation. Catalyzes the transfer of a GlcNAc subunit on undecaprenyl-pyrophosphoryl-MurNAc-pentapeptide (lipid intermediate I) to form undecaprenyl-pyrophosphoryl-MurNAc-(pentapeptide)GlcNAc (lipid intermediate II). The chain is UDP-N-acetylglucosamine--N-acetylmuramyl-(pentapeptide) pyrophosphoryl-undecaprenol N-acetylglucosamine transferase from Dichelobacter nodosus (strain VCS1703A).